The sequence spans 197 residues: uncharacterized protein (197 aa).

This is an uncharacterized protein from Archaeoglobus fulgidus (strain ATCC 49558 / DSM 4304 / JCM 9628 / NBRC 100126 / VC-16).